The following is a 204-amino-acid chain: bMERB domain-containing protein 1 (204 aa).

The region spanning Leu-3–Asp-150 is the bMERB domain. The interval Val-162–Thr-187 is disordered.

This is bMERB domain-containing protein 1 (BMERB1) from Pongo abelii (Sumatran orangutan).